The sequence spans 111 residues: WAP four-disulfide core domain protein 12 (111 aa).

A signal peptide spans 1 to 23; it reads MGSSSFLVLMVSLTLVTLVAAEG. The 48-residue stretch at 27-74 folds into the WAP domain; that stretch reads GIEKAGVCPADNVRCFKSDPPQCHTDQDCLGERKCCYLHCGFKCVIPV. Disulfide bonds link Cys-34-Cys-62, Cys-41-Cys-66, Cys-49-Cys-61, and Cys-55-Cys-70. The segment at 80-111 is disordered; it reads GGNKDEDVSGPCPEPGWEAKSPGSSSTGCPQK. A compositionally biased stretch (polar residues) spans 101 to 111; that stretch reads PGSSSTGCPQK.

It localises to the secreted. Antibacterial protein. Putative acid-stable proteinase inhibitor. This chain is WAP four-disulfide core domain protein 12 (WFDC12), found in Chlorocebus aethiops (Green monkey).